A 216-amino-acid chain; its full sequence is MTTPVSFHPQAFIELALSRGVLKFGEFTLKSGRVSPYFFNAGLLNDGEALSLLAQGYADKLTQCENVDVIFGPAYKGIPFVAATAVALSQTHNKSVPWGFNRKEAKDHGEGGILVGAAVEGKKVWIIDDVITAGTAIREVVTILKNAGATIAGVLVALDRQERGQGELSAIQEVQKELEIPVHALITMKDLMDYLEAKGEKEALANMQAYREKYGI.

Residue Lys-30 coordinates 5-phospho-alpha-D-ribose 1-diphosphate. 38–39 lines the orotate pocket; the sequence is FF. 5-phospho-alpha-D-ribose 1-diphosphate contacts are provided by residues 75 to 76, Arg-102, Lys-103, Lys-106, His-108, and 128 to 136; these read YK and DDVITAGTA. Residues Thr-132 and Arg-160 each coordinate orotate.

It belongs to the purine/pyrimidine phosphoribosyltransferase family. PyrE subfamily. In terms of assembly, homodimer. Requires Mg(2+) as cofactor.

It catalyses the reaction orotidine 5'-phosphate + diphosphate = orotate + 5-phospho-alpha-D-ribose 1-diphosphate. Its pathway is pyrimidine metabolism; UMP biosynthesis via de novo pathway; UMP from orotate: step 1/2. Functionally, catalyzes the transfer of a ribosyl phosphate group from 5-phosphoribose 1-diphosphate to orotate, leading to the formation of orotidine monophosphate (OMP). This chain is Orotate phosphoribosyltransferase, found in Acinetobacter baumannii (strain AB307-0294).